We begin with the raw amino-acid sequence, 262 residues long: Type III pantothenate kinase (262 aa).

9–16 (DIGNTNIV) contacts ATP. Residues Tyr-103 and 110 to 113 (GVDR) each bind substrate. Residue Asp-112 is the Proton acceptor of the active site. Residue Asp-132 participates in K(+) binding. Position 135 (Thr-135) interacts with ATP. Thr-187 contacts substrate.

Belongs to the type III pantothenate kinase family. As to quaternary structure, homodimer. NH4(+) serves as cofactor. Requires K(+) as cofactor.

It localises to the cytoplasm. It carries out the reaction (R)-pantothenate + ATP = (R)-4'-phosphopantothenate + ADP + H(+). Its pathway is cofactor biosynthesis; coenzyme A biosynthesis; CoA from (R)-pantothenate: step 1/5. In terms of biological role, catalyzes the phosphorylation of pantothenate (Pan), the first step in CoA biosynthesis. In Finegoldia magna (strain ATCC 29328 / DSM 20472 / WAL 2508) (Peptostreptococcus magnus), this protein is Type III pantothenate kinase.